The following is a 146-amino-acid chain: Large ribosomal subunit protein uL15 (146 aa).

Positions 1–54 are disordered; that stretch reads MTLRLNELAPAEGAKREHRRLGRGIGSGVGKTGGRGIKGQKSRKSGGVRPGFEG. The span at 23–37 shows a compositional bias: gly residues; it reads RGIGSGVGKTGGRGI.

It belongs to the universal ribosomal protein uL15 family. As to quaternary structure, part of the 50S ribosomal subunit.

In terms of biological role, binds to the 23S rRNA. The polypeptide is Large ribosomal subunit protein uL15 (Acinetobacter baumannii (strain SDF)).